The sequence spans 375 residues: Chaperone protein DnaJ (375 aa).

The J domain occupies 5-70 (DYYSLLEVER…QKRAAYDRYG (66 aa)). The segment at 135-213 (GKTVDIEIDV…CHGEGRCEKH (79 aa)) adopts a CR-type zinc-finger fold. The Zn(2+) site is built by Cys-148, Cys-151, Cys-165, Cys-168, Cys-187, Cys-190, Cys-201, and Cys-204. CXXCXGXG motif repeat units follow at residues 148-155 (CDACHGSG), 165-172 (CDTCHGSG), 187-194 (CPVCQGKG), and 201-208 (CPECHGEG).

The protein belongs to the DnaJ family. As to quaternary structure, homodimer. Zn(2+) serves as cofactor.

The protein resides in the cytoplasm. Functionally, participates actively in the response to hyperosmotic and heat shock by preventing the aggregation of stress-denatured proteins and by disaggregating proteins, also in an autonomous, DnaK-independent fashion. Unfolded proteins bind initially to DnaJ; upon interaction with the DnaJ-bound protein, DnaK hydrolyzes its bound ATP, resulting in the formation of a stable complex. GrpE releases ADP from DnaK; ATP binding to DnaK triggers the release of the substrate protein, thus completing the reaction cycle. Several rounds of ATP-dependent interactions between DnaJ, DnaK and GrpE are required for fully efficient folding. Also involved, together with DnaK and GrpE, in the DNA replication of plasmids through activation of initiation proteins. The polypeptide is Chaperone protein DnaJ (Zymomonas mobilis subsp. mobilis (strain ATCC 31821 / ZM4 / CP4)).